The primary structure comprises 652 residues: Carboxypeptidase Z (652 aa).

An N-terminal signal peptide occupies residues 1-20; the sequence is MPTTPLLLAALAALAALAVA. In terms of domain architecture, FZ spans 41 to 163; it reads THSATCVDLH…APEEEGCYDP (123 aa). 5 disulfides stabilise this stretch: Cys-46–Cys-112, Cys-54–Cys-105, Cys-96–Cys-132, Cys-121–Cys-160, and Cys-125–Cys-149. N-linked (GlcNAc...) asparagine glycosylation is present at Asn-60. Residues 189-505 enclose the Peptidase M14 domain; it reads AHHSYAQMVR…EPLLNFLEMV (317 aa). Residues His-251 and Glu-254 each coordinate Zn(2+). An N-linked (GlcNAc...) asparagine glycan is attached at Asn-284. Position 383 (His-383) interacts with Zn(2+). Glu-475 (proton donor/acceptor) is an active-site residue. Residues 594 to 628 form a disordered region; sequence FLPGPSRALPRSLDPQGAPAQLDFEPPRARRQPAS.

This sequence belongs to the peptidase M14 family. Zn(2+) is required as a cofactor. In terms of tissue distribution, abundantly expressed in the placenta, with low to moderate levels in the brain, lung, thymus and kidney.

The protein resides in the secreted. The protein localises to the extracellular space. It is found in the extracellular matrix. With respect to regulation, inhibited by 2-mercaptomethyl-3-guanidinoethylthiopropanoic acid (MGTA) and guanidinoethylmercaptosuccinic acid (GEMSA). Inhibited by chelating agents such as EDTA and EGTA. Its function is as follows. Cleaves substrates with C-terminal arginine residues. Probably modulates the Wnt signaling pathway, by cleaving some undefined protein. May play a role in cleavage during prohormone processing. The sequence is that of Carboxypeptidase Z (Cpz) from Rattus norvegicus (Rat).